Here is a 59-residue protein sequence, read N- to C-terminus: Lantipeptide Flvbeta.f (59 aa).

Positions 1-27 (MEKMNNIAGITPENELDEMFDDSVVGA) are cleaved as a propeptide — cleaved by FlvT. 2,3-didehydrobutyrine; by FlvM2 is present on residues Thr31 and Thr32. Cross-links (beta-methyllanthionine (Thr-Cys); by FlvM2) lie at residues 41–47 (TKNPQIC) and 53–56 (TVKC).

In terms of processing, contains DL-beta-methyllanthionine, when coepressed in E.coli with the flavecin synthetase FlvM2.

It is found in the secreted. Its function is as follows. Lanthionine-containing peptide that does probably not show antibacterial activity, since its analog [+7]Flvbeta.f does not show antibacterial activity against M.luteus. Also does not show antibiotic activity when tested with [Del2]Flvalpha.a, an analog of Flvalpha.a, which is encoded by the same operon than Flvbeta.f. The bactericidal activity of lantibiotics is based on depolarization of energized bacterial cytoplasmic membranes, initiated by the formation of aqueous transmembrane pores. The chain is Lantipeptide Flvbeta.f from Ruminococcus flavefaciens.